The sequence spans 745 residues: Polyribonucleotide nucleotidyltransferase (745 aa).

The Mg(2+) site is built by aspartate 487 and aspartate 493. A KH domain is found at 554 to 613; it reads PRIETMQIPTDKIRDVIGTGGKIIREIVEKTGAKINIEDTGVVKIASSDGKAIKAAYNWI. Positions 623-691 constitute an S1 motif domain; that stretch reads GTIYDGTIVK…ERGKIRLSMK (69 aa). The segment at 695-745 is disordered; the sequence is QETGEDITEKLKAERAERGEPEREERSDRGDRGDRGPRRDRGERRRESSGE. Over residues 701-745 the composition is skewed to basic and acidic residues; sequence ITEKLKAERAERGEPEREERSDRGDRGDRGPRRDRGERRRESSGE.

Belongs to the polyribonucleotide nucleotidyltransferase family. Requires Mg(2+) as cofactor.

The protein localises to the cytoplasm. The enzyme catalyses RNA(n+1) + phosphate = RNA(n) + a ribonucleoside 5'-diphosphate. Functionally, involved in mRNA degradation. Catalyzes the phosphorolysis of single-stranded polyribonucleotides processively in the 3'- to 5'-direction. This chain is Polyribonucleotide nucleotidyltransferase, found in Methylorubrum populi (strain ATCC BAA-705 / NCIMB 13946 / BJ001) (Methylobacterium populi).